The sequence spans 324 residues: Acetyl-coenzyme A carboxylase carboxyl transferase subunit alpha (324 aa).

The CoA carboxyltransferase C-terminal domain occupies 37 to 291; the sequence is ILEEKLENLE…DLMIQKTFQQ (255 aa).

It belongs to the AccA family. Acetyl-CoA carboxylase is a heterohexamer composed of biotin carboxyl carrier protein (AccB), biotin carboxylase (AccC) and two subunits each of ACCase subunit alpha (AccA) and ACCase subunit beta (AccD).

It localises to the cytoplasm. It carries out the reaction N(6)-carboxybiotinyl-L-lysyl-[protein] + acetyl-CoA = N(6)-biotinyl-L-lysyl-[protein] + malonyl-CoA. Its pathway is lipid metabolism; malonyl-CoA biosynthesis; malonyl-CoA from acetyl-CoA: step 1/1. In terms of biological role, component of the acetyl coenzyme A carboxylase (ACC) complex. First, biotin carboxylase catalyzes the carboxylation of biotin on its carrier protein (BCCP) and then the CO(2) group is transferred by the carboxyltransferase to acetyl-CoA to form malonyl-CoA. The sequence is that of Acetyl-coenzyme A carboxylase carboxyl transferase subunit alpha from Bacillus cereus (strain ATCC 14579 / DSM 31 / CCUG 7414 / JCM 2152 / NBRC 15305 / NCIMB 9373 / NCTC 2599 / NRRL B-3711).